The chain runs to 126 residues: Aspartate 1-decarboxylase (126 aa).

The Schiff-base intermediate with substrate; via pyruvic acid role is filled by S25. Position 25 is a pyruvic acid (Ser) (S25). T57 serves as a coordination point for substrate. Y58 (proton donor) is an active-site residue. A substrate-binding site is contributed by 73–75; that stretch reads GAA.

It belongs to the PanD family. Heterooctamer of four alpha and four beta subunits. Requires pyruvate as cofactor. In terms of processing, is synthesized initially as an inactive proenzyme, which is activated by self-cleavage at a specific serine bond to produce a beta-subunit with a hydroxyl group at its C-terminus and an alpha-subunit with a pyruvoyl group at its N-terminus.

It is found in the cytoplasm. It catalyses the reaction L-aspartate + H(+) = beta-alanine + CO2. It functions in the pathway cofactor biosynthesis; (R)-pantothenate biosynthesis; beta-alanine from L-aspartate: step 1/1. In terms of biological role, catalyzes the pyruvoyl-dependent decarboxylation of aspartate to produce beta-alanine. The polypeptide is Aspartate 1-decarboxylase (Psychrobacter sp. (strain PRwf-1)).